We begin with the raw amino-acid sequence, 506 residues long: uncharacterized protein (506 aa).

Disordered stretches follow at residues 104-144 (PNSS…ATSS) and 397-456 (QQQK…DQLP). Over residues 130–144 (ESSPTLSSSSLATSS) the composition is skewed to low complexity. Over residues 405-443 (IKDEDKNEKENKSENEEKEKEKEKEKEKEKEKEKEKEKE) the composition is skewed to basic and acidic residues. Residues 405 to 455 (IKDEDKNEKENKSENEEKEKEKEKEKEKEKEKEKEKEKENEEGEEDNGDQL) adopt a coiled-coil conformation.

This is an uncharacterized protein from Dictyostelium discoideum (Social amoeba).